We begin with the raw amino-acid sequence, 325 residues long: ADP-L-glycero-D-manno-heptose-6-epimerase (325 aa).

NADP(+) is bound by residues 10 to 11, 31 to 32, lysine 38, and 75 to 79; these read FI, DD, and EGACS. Tyrosine 139 serves as the catalytic Proton acceptor. Lysine 143 contacts NADP(+). Asparagine 167 is a binding site for substrate. NADP(+)-binding residues include valine 168 and lysine 176. Residue lysine 176 is the Proton acceptor of the active site. Residues serine 178, histidine 185, 199 to 202, arginine 212, and tyrosine 285 each bind substrate; that span reads FEGS.

It belongs to the NAD(P)-dependent epimerase/dehydratase family. HldD subfamily. As to quaternary structure, homopentamer. NADP(+) serves as cofactor.

It carries out the reaction ADP-D-glycero-beta-D-manno-heptose = ADP-L-glycero-beta-D-manno-heptose. Its pathway is nucleotide-sugar biosynthesis; ADP-L-glycero-beta-D-manno-heptose biosynthesis; ADP-L-glycero-beta-D-manno-heptose from D-glycero-beta-D-manno-heptose 7-phosphate: step 4/4. Catalyzes the interconversion between ADP-D-glycero-beta-D-manno-heptose and ADP-L-glycero-beta-D-manno-heptose via an epimerization at carbon 6 of the heptose. The chain is ADP-L-glycero-D-manno-heptose-6-epimerase from Azoarcus sp. (strain BH72).